Consider the following 185-residue polypeptide: Ribose 1,5-bisphosphate phosphokinase PhnN (185 aa).

10 to 17 (GPSGSGKD) serves as a coordination point for ATP.

The protein belongs to the ribose 1,5-bisphosphokinase family.

The enzyme catalyses alpha-D-ribose 1,5-bisphosphate + ATP = 5-phospho-alpha-D-ribose 1-diphosphate + ADP. It functions in the pathway metabolic intermediate biosynthesis; 5-phospho-alpha-D-ribose 1-diphosphate biosynthesis; 5-phospho-alpha-D-ribose 1-diphosphate from D-ribose 5-phosphate (route II): step 3/3. Functionally, catalyzes the phosphorylation of ribose 1,5-bisphosphate to 5-phospho-D-ribosyl alpha-1-diphosphate (PRPP). The chain is Ribose 1,5-bisphosphate phosphokinase PhnN from Escherichia coli O157:H7.